The chain runs to 267 residues: Small ribosomal subunit protein mS23 (267 aa).

The tract at residues 230–267 (VKTASKDGKSSNGSMGAEDVVEKTTSAWETEFVEEESS) is disordered.

The protein belongs to the mitochondrion-specific ribosomal protein mS23 family. In terms of assembly, component of the mitochondrial small ribosomal subunit.

The protein resides in the mitochondrion. This is Small ribosomal subunit protein mS23 (RSM25) from Meyerozyma guilliermondii (strain ATCC 6260 / CBS 566 / DSM 6381 / JCM 1539 / NBRC 10279 / NRRL Y-324) (Yeast).